A 284-amino-acid polypeptide reads, in one-letter code: Nucleoid occlusion protein (284 aa).

The H-T-H motif DNA-binding region spans 143 to 162 (EALAQRVGKSQSAIANKMRL).

The protein belongs to the ParB family.

The protein localises to the cytoplasm. It localises to the nucleoid. Functionally, effects nucleoid occlusion by binding relatively nonspecifically to DNA and preventing the assembly of the division machinery in the vicinity of the nucleoid, especially under conditions that disturb the cell cycle. It helps to coordinate cell division and chromosome segregation by preventing the formation of the Z ring through the nucleoid, which would cause chromosome breakage. The polypeptide is Nucleoid occlusion protein (Listeria monocytogenes serotype 4b (strain CLIP80459)).